The primary structure comprises 41 residues: Large ribosomal subunit protein bL36 (41 aa).

The protein belongs to the bacterial ribosomal protein bL36 family.

The sequence is that of Large ribosomal subunit protein bL36 from Erythrobacter litoralis (strain HTCC2594).